The primary structure comprises 530 residues: Autoinducer-2 kinase (530 aa).

The protein belongs to the FGGY kinase family.

It is found in the cytoplasm. The enzyme catalyses (S)-4,5-dihydroxypentane-2,3-dione + ATP = (2S)-2-hydroxy-3,4-dioxopentyl phosphate + ADP + H(+). In terms of biological role, catalyzes the phosphorylation of autoinducer-2 (AI-2) to phospho-AI-2, which subsequently inactivates the transcriptional regulator LsrR and leads to the transcription of the lsr operon. Phosphorylates the ring-open form of (S)-4,5-dihydroxypentane-2,3-dione (DPD), which is the precursor to all AI-2 signaling molecules, at the C5 position. The chain is Autoinducer-2 kinase from Photorhabdus laumondii subsp. laumondii (strain DSM 15139 / CIP 105565 / TT01) (Photorhabdus luminescens subsp. laumondii).